The primary structure comprises 316 residues: Ribosomal RNA small subunit methyltransferase H (316 aa).

Residues 35-37, aspartate 55, phenylalanine 79, aspartate 101, and glutamine 108 each bind S-adenosyl-L-methionine; that span reads GGH.

Belongs to the methyltransferase superfamily. RsmH family.

It localises to the cytoplasm. The catalysed reaction is cytidine(1402) in 16S rRNA + S-adenosyl-L-methionine = N(4)-methylcytidine(1402) in 16S rRNA + S-adenosyl-L-homocysteine + H(+). Specifically methylates the N4 position of cytidine in position 1402 (C1402) of 16S rRNA. The sequence is that of Ribosomal RNA small subunit methyltransferase H from Aliivibrio fischeri (strain MJ11) (Vibrio fischeri).